The chain runs to 90 residues: Leech factor Xa inhibitor (90 aa).

The protein localises to the secreted. Potent anticoagulant inhibiting the amidolytic activity of factor Xa (F10) (Ki=4nM) and reducing its ability to activate prothrombin (F2) in the prothrombinase complex (EC(50)=40nM). This is Leech factor Xa inhibitor from Haementeria depressa (Leech).